We begin with the raw amino-acid sequence, 161 residues long: Decarboxylase (161 aa).

Positions 29–131 (QGMSEEAYRK…VGDHENFADT (103 aa)) constitute an EthD domain.

Belongs to the tpcK family.

It catalyses the reaction atrochrysone carboxylate + H(+) = atrochrysone + CO2. It functions in the pathway secondary metabolite biosynthesis. Decarboxylase; part of the gene cluster that mediates the biosynthesis of monodictyphenone, a prenyl xanthone derivative. The pathway begins with the synthesis of atrochrysone thioester by the polyketide synthase (PKS) mdpG. The atrochrysone carboxyl ACP thioesterase mdpF then breaks the thioester bond and releases the atrochrysone carboxylic acid from mdpG. The atrochrysone carboxylic acid is then converted to atrochrysone which is further transformed into emodin anthrone by mdpH-1 and mdpH-2. Emodin is further modified to yield monodictyphenone via several steps involving mdpB, mdpC mdpJ, mdpK and mdpL. These enzymes with xptA, xptB and xptC are also proposed to be involved in the synthesis of shamixanthone from emodin. Especially, direct reduction of emodin by the short chain dehydrogenase mdpC followed by dehydration catalyzed by the scytalone dehydratase-like protein mdpB gives loss of oxygen and formation of chrysophanol intermediate in two simple steps. This Emericella nidulans (strain FGSC A4 / ATCC 38163 / CBS 112.46 / NRRL 194 / M139) (Aspergillus nidulans) protein is Decarboxylase.